A 500-amino-acid chain; its full sequence is Endonuclease domain-containing 1 protein (500 aa).

The signal sequence occupies residues 1-21; sequence MGTARWLALGSLFALAGLLEG. Residues 293–323 are disordered; that stretch reads ERMVQSQKSSSPLSSTRSKRSTLLPPEASEG. A compositionally biased stretch (low complexity) spans 297-317; it reads QSQKSSSPLSSTRSKRSTLLP. The residue at position 407 (K407) is an N6-acetyllysine.

The protein belongs to the DNA/RNA non-specific endonuclease family. In terms of assembly, interacts with RNF26; this interaction is important to modulate innate immune signaling through the cGAS-STING pathway.

It is found in the secreted. In terms of biological role, may act as a DNase and a RNase. Plays a role in the modulation of innate immune signaling through the cGAS-STING pathway by interacting with RNF26. In Homo sapiens (Human), this protein is Endonuclease domain-containing 1 protein (ENDOD1).